Consider the following 184-residue polypeptide: PXMP2/4 family protein 3 (184 aa).

Positions 1–44 (MSNSKPLSLTDAVTTWYMKKLKSKPIQTKALTSATLSFISSVVA) are cleaved as a signal peptide. 3 consecutive transmembrane segments (helical) span residues 58 to 78 (VVKF…WHII), 97 to 117 (IVDQ…VLAI), and 159 to 179 (LRVL…SILA).

Belongs to the peroxisomal membrane protein PXMP2/4 family.

It localises to the membrane. The polypeptide is PXMP2/4 family protein 3 (Dictyostelium discoideum (Social amoeba)).